Reading from the N-terminus, the 324-residue chain is Annexin A10 (324 aa).

Annexin repeat units lie at residues 17–88 (FNPM…GLMY), 89–160 (PPPS…NLVQ), 171–243 (AMAA…AIVR), and 247–318 (DKPS…AICA).

Belongs to the annexin family.

The protein is Annexin A10 (Anxa10) of Mus musculus (Mouse).